The chain runs to 343 residues: Ribosomal RNA small subunit methyltransferase C (343 aa).

It belongs to the methyltransferase superfamily. RsmC family. As to quaternary structure, monomer.

The protein localises to the cytoplasm. The catalysed reaction is guanosine(1207) in 16S rRNA + S-adenosyl-L-methionine = N(2)-methylguanosine(1207) in 16S rRNA + S-adenosyl-L-homocysteine + H(+). Functionally, specifically methylates the guanine in position 1207 of 16S rRNA in the 30S particle. This chain is Ribosomal RNA small subunit methyltransferase C, found in Escherichia coli O6:K15:H31 (strain 536 / UPEC).